Here is a 971-residue protein sequence, read N- to C-terminus: Kinesin-like protein KIN-6 (971 aa).

Disordered regions lie at residues 1 to 44 and 93 to 121; these read MEEK…SSLA and TTTT…RNPE. Residues 29–39 show a composition bias toward low complexity; the sequence is ATPFTTTTKPP. Residues 76 to 460 form the Kinesin motor domain; it reads SLKIFLRIKP…LRQASPYMKI (385 aa). 202–209 provides a ligand contact to ATP; it reads GPSGSGKT. Positions 700–709 are enriched in basic and acidic residues; sequence RREAGSEESS. 2 disordered regions span residues 700–856 and 872–917; these read RREA…TEEM and KTTN…RLQP. A compositionally biased stretch (polar residues) spans 768 to 783; sequence QSVNSEENVGIPSTIT. Over residues 785–797 the composition is skewed to basic and acidic residues; that stretch reads VEAEVTDFQRDQN. Over residues 809–827 the composition is skewed to polar residues; sequence EVSQDCINSGLSNVQTKSA. Residues 831–842 show a composition bias toward basic and acidic residues; it reads RFPDSEKQERNR. Residues 903 to 915 show a composition bias toward basic residues; sequence KKQKNGQKPKRRL.

It belongs to the TRAFAC class myosin-kinesin ATPase superfamily. Kinesin family. KIN-6 subfamily.

The protein is Kinesin-like protein KIN-6 of Arabidopsis thaliana (Mouse-ear cress).